A 387-amino-acid polypeptide reads, in one-letter code: Small ribosomal subunit protein mS31 (387 aa).

A mitochondrion-targeting transit peptide spans 1–56 (MLHRIPAFIRPRPFSGLPLSCGNREVSVAASVLPAAGSGAVRTENTIQRHFCTSRS). Disordered regions lie at residues 59–83 (SKKDDQSVPANETSQKAAESQGEGK) and 203–228 (KSPSMRVSSRPQHQIQFDEEVDSSLS). 2 stretches are compositionally biased toward polar residues: residues 66–76 (VPANETSQKAA) and 207–217 (MRVSSRPQHQI).

This sequence belongs to the mitochondrion-specific ribosomal protein mS31 family. As to quaternary structure, component of the mitochondrial ribosome small subunit (28S) which comprises a 12S rRNA and about 30 distinct proteins.

It localises to the mitochondrion. The polypeptide is Small ribosomal subunit protein mS31 (Mrps31) (Rattus norvegicus (Rat)).